The primary structure comprises 96 residues: Venom protein 3.1 (96 aa).

The N-terminal stretch at 1–25 (MKFSLISVFLFAVFLSNENIFQAIA) is a signal peptide. The tract at residues 45 to 84 (EAVMSSSLTNEEESRNWPHRATRNTLEKGQKRSPAARSEI) is disordered.

The protein belongs to the non-disulfide-bridged peptide (NDBP) superfamily. Expressed by the venom gland.

Its subcellular location is the secreted. The sequence is that of Venom protein 3.1 from Lychas mucronatus (Chinese swimming scorpion).